A 210-amino-acid chain; its full sequence is Chaperone protein TorD (210 aa).

This sequence belongs to the TorD/DmsD family. TorD subfamily.

The protein resides in the cytoplasm. Its function is as follows. Involved in the biogenesis of TorA. Acts on TorA before the insertion of the molybdenum cofactor and, as a result, probably favors a conformation of the apoenzyme that is competent for acquiring the cofactor. This chain is Chaperone protein TorD, found in Salmonella newport (strain SL254).